Here is a 95-residue protein sequence, read N- to C-terminus: Integration host factor subunit beta (95 aa).

Residues 56–76 (RAPRTGRNPKTGSSVDLEGKY) are disordered.

It belongs to the bacterial histone-like protein family. In terms of assembly, heterodimer of an alpha and a beta chain.

In terms of biological role, this protein is one of the two subunits of integration host factor, a specific DNA-binding protein that functions in genetic recombination as well as in transcriptional and translational control. The chain is Integration host factor subunit beta from Shewanella baltica (strain OS223).